The chain runs to 573 residues: MLO-like protein 2 (573 aa).

At 1–15 (MADQVKERTLEETST) the chain is on the extracellular side. The helical transmembrane segment at 16 to 36 (WAVAVVCFVLLFISIVLEHSI) threads the bilayer. The Cytoplasmic portion of the chain corresponds to 37 to 61 (HKIGTWFKKKHKQALFEALEKVKAE). A helical membrane pass occupies residues 62–82 (LMLLGFISLLLTIGQTPISNI). Topologically, residues 83–164 (CISQKVASTM…VSAYGIHQLH (82 aa)) are extracellular. A helical transmembrane segment spans residues 165–185 (IFIFVLAVVHVVYCIVTYAFG). At 186-287 (KIKMRTWKSW…KYIQRSLEKD (102 aa)) the chain is on the cytoplasmic side. A helical membrane pass occupies residues 288–308 (FKTVVEISPVIWFVAVLFLLT). The Extracellular portion of the chain corresponds to 309–317 (NSYGLRSYL). Residues 318 to 338 (WLPFIPLVVILIVGTKLEVII) traverse the membrane as a helical segment. The Cytoplasmic segment spans residues 339–371 (TKLGLRIQEKGDVVRGAPVVQPGDDLFWFGKPR). The chain crosses the membrane as a helical span at residues 372 to 392 (FILFLIHLVLFTNAFQLAFFA). The Extracellular segment spans residues 393-415 (WSTYEFNLNNCFHESTADVVIRL). The helical transmembrane segment at 416–436 (VVGAVVQILCSYVTLPLYALV) threads the bilayer. The Cytoplasmic segment spans residues 437–573 (TQMGSKMKPT…KSLRDFSFKK (137 aa)). Positions 450–471 (DRVATALKKWHHTAKNETKHGR) are calmodulin-binding. A disordered region spans residues 462–573 (TAKNETKHGR…KSLRDFSFKK (112 aa)). Polar residues-rich tracts occupy residues 473 to 490 (SGSN…THGS) and 498 to 513 (NFNN…SPSP). Serine 512 bears the Phosphoserine mark. A compositionally biased stretch (basic and acidic residues) spans 522–548 (EHQFWDPESQHQEAETSTHHSLAHESS).

The protein belongs to the MLO family.

Its subcellular location is the membrane. Functionally, may be involved in modulation of pathogen defense and leaf cell death. Activity seems to be regulated by Ca(2+)-dependent calmodulin binding and seems not to require heterotrimeric G proteins. In Arabidopsis thaliana (Mouse-ear cress), this protein is MLO-like protein 2 (MLO2).